The primary structure comprises 326 residues: 5,10-methylenetetrahydromethanopterin reductase (326 aa).

It belongs to the mer family.

It localises to the cytoplasm. The catalysed reaction is 5-methyl-5,6,7,8-tetrahydromethanopterin + oxidized coenzyme F420-(gamma-L-Glu)(n) + H(+) = 5,10-methylenetetrahydromethanopterin + reduced coenzyme F420-(gamma-L-Glu)(n). Its pathway is one-carbon metabolism; methanogenesis from CO(2); methyl-coenzyme M from 5,10-methylene-5,6,7,8-tetrahydromethanopterin: step 1/2. Catalyzes the reversible reduction of methylene-H(4)MPT to methyl-H(4)MPT. This Methanolobus tindarius protein is 5,10-methylenetetrahydromethanopterin reductase.